The chain runs to 404 residues: S-adenosylmethionine synthase (404 aa).

Position 139–144 (139–144) interacts with ATP; that stretch reads GKGSSD.

This sequence belongs to the AdoMet synthase 2 family. It depends on Mg(2+) as a cofactor.

The enzyme catalyses L-methionine + ATP + H2O = S-adenosyl-L-methionine + phosphate + diphosphate. Its pathway is amino-acid biosynthesis; S-adenosyl-L-methionine biosynthesis; S-adenosyl-L-methionine from L-methionine: step 1/1. Its function is as follows. Catalyzes the formation of S-adenosylmethionine from methionine and ATP. This chain is S-adenosylmethionine synthase, found in Saccharolobus solfataricus (strain ATCC 35092 / DSM 1617 / JCM 11322 / P2) (Sulfolobus solfataricus).